We begin with the raw amino-acid sequence, 193 residues long: CASP-like protein 1D2 (193 aa).

The Cytoplasmic segment spans residues 1–30 (MASTDKPGGDPEYRTSSTPAPAGVDYFKFD). Residues 31–51 (VILRFLLFAASLVAVVVIVTA) form a helical membrane-spanning segment. Residue N52 is glycosylated (N-linked (GlcNAc...) asparagine). The Extracellular portion of the chain corresponds to 52–73 (NQTEVIRVPQPVPWPAKFRYSP). The chain crosses the membrane as a helical span at residues 74-94 (AFVYFVAALSVTGLYSIITTL). At 95–108 (ASLLASNKPALKTK) the chain is on the cytoplasmic side. A helical transmembrane segment spans residues 109–129 (LLLYFILWDALILGIIASATG). At 130 to 161 (TAGGVAYLGLKGNRHVVGWNKICHVYDKFCRH) the chain is on the extracellular side. A helical transmembrane segment spans residues 162 to 182 (VGASIAVALFGSVVTVLLIWL). Residues 183–193 (SAYSIHSRVPK) lie on the Cytoplasmic side of the membrane.

Belongs to the Casparian strip membrane proteins (CASP) family. As to quaternary structure, homodimer and heterodimers.

The protein resides in the cell membrane. This Glycine max (Soybean) protein is CASP-like protein 1D2.